A 95-amino-acid polypeptide reads, in one-letter code: Large ribosomal subunit protein uL23 (95 aa).

This sequence belongs to the universal ribosomal protein uL23 family. As to quaternary structure, part of the 50S ribosomal subunit. Contacts protein L29, and trigger factor when it is bound to the ribosome.

In terms of biological role, one of the early assembly proteins it binds 23S rRNA. One of the proteins that surrounds the polypeptide exit tunnel on the outside of the ribosome. Forms the main docking site for trigger factor binding to the ribosome. The polypeptide is Large ribosomal subunit protein uL23 (Levilactobacillus brevis (strain ATCC 367 / BCRC 12310 / CIP 105137 / JCM 1170 / LMG 11437 / NCIMB 947 / NCTC 947) (Lactobacillus brevis)).